The chain runs to 280 residues: Transmembrane protein 119 (280 aa).

Positions 1–20 are cleaved as a signal peptide; the sequence is MVPWFLLSLLLLARPVPGVA. Residues 21–91 are Extracellular-facing; that stretch reads YSVSLPASFL…IMDFFRQYVM (71 aa). Residue serine 36 is glycosylated (O-linked (Xyl...) (chondroitin sulfate) serine). Residues 38-47 are compositionally biased toward low complexity; sequence EAEGSSASSP. Residues 38 to 73 are disordered; the sequence is EAEGSSASSPSLPPPGTPAFSPTPERPQPTALDGPV. A helical transmembrane segment spans residues 92–112; sequence LIAVVGSLTFLIMFIVCAALI. Over 113-280 the chain is Cytoplasmic; the sequence is TRQKHKATAY…CACNRVSPSV (168 aa). Disordered stretches follow at residues 133 to 162 and 181 to 280; these read VDQRDRAGGPRTFSEVPDRAPDSRHEEGLD and PARA…SPSV. Residues 148-162 show a composition bias toward basic and acidic residues; that stretch reads VPDRAPDSRHEEGLD. A Phosphoserine modification is found at serine 269.

As to quaternary structure, interacts with SMAD1, SMAD5 and RUNX2. In terms of tissue distribution, expressed in spermatocytes and spermatids in the developing testis (at protein level). Expressed in the brain, heart, lung, spleen, skeletal muscle, ovary, testis and epididymis. Predominantly expressed in osteoblasts.

It localises to the cell membrane. Its subcellular location is the cytoplasm. The protein localises to the endoplasmic reticulum membrane. It is found in the secreted. Functionally, plays an important role in bone formation and normal bone mineralization. Promotes the differentiation of myoblasts into osteoblasts. May induce the commitment and differentiation of myoblasts into osteoblasts through an enhancement of BMP2 production and interaction with the BMP-RUNX2 pathway. Up-regulates the expression of ATF4 which plays a central role in osteoblast differentiation. Essential for normal spermatogenesis and late testicular differentiation. The polypeptide is Transmembrane protein 119 (Tmem119) (Mus musculus (Mouse)).